Reading from the N-terminus, the 310-residue chain is MLKIIRAGMYTTVQDGGRHGFRQSGISHCGALDMPALRIANLLVGNDANAPALEITLGQLTVEFETDGWFALTGAGCEARLDDNAVWTGWRLPMKAGQRLTLKRPQHGMRSYLAVAGGIDVPPVMGSCSTDLKVGIGGLEGRLLKDGDRLPIGKSKRDSMEAQGVKQLLWGNRIRALPGPEYHEFDRASQDAFWRSPWQLSSQSNRMGYRLQGQILKRTTDRELLSHGLLPGVVQVPHNGQPIVLMNDAQTTGGYPRIACIIEADMYHLAQIPLGQPIHFVQCSLEEALKARQDQQRYFEQLAWRLHNEN.

It belongs to the PxpC family. In terms of assembly, forms a complex composed of PxpA, PxpB and PxpC.

It carries out the reaction 5-oxo-L-proline + ATP + 2 H2O = L-glutamate + ADP + phosphate + H(+). Functionally, catalyzes the cleavage of 5-oxoproline to form L-glutamate coupled to the hydrolysis of ATP to ADP and inorganic phosphate. The chain is 5-oxoprolinase subunit C from Escherichia coli (strain K12).